Consider the following 414-residue polypeptide: MANSC domain-containing protein 1 (414 aa).

Positions 1–24 (MLFRGTSLAYSLLVISFLTPRSSA) are cleaved as a signal peptide. The Extracellular portion of the chain corresponds to 25-369 (GQNCLTKSLE…HGLSFEKWLL (345 aa)). The MANSC domain occupies 32 to 116 (SLEDVVIDIQ…LKPAKGLVTY (85 aa)). N-linked (GlcNAc...) asparagine glycosylation is found at Asn-128, Asn-234, and Asn-335. Residues 311–339 (FQGGSTLTSDPRHGKSSTSESSITNKTAS) are disordered. The segment covering 326-338 (SSTSESSITNKTA) has biased composition (polar residues). A helical transmembrane segment spans residues 370 to 392 (IGTLLCGVLFLVIGLVLLGRMLV). At 393-414 (EALRRKRYSRLDYLINGIYVDI) the chain is on the cytoplasmic side.

It localises to the membrane. The polypeptide is MANSC domain-containing protein 1 (Mansc1) (Mus musculus (Mouse)).